The sequence spans 202 residues: uncharacterized protein (202 aa).

This is an uncharacterized protein from Bacillus anthracis.